The primary structure comprises 490 residues: Glutamyl-tRNA(Gln) amidotransferase subunit A (490 aa).

Residues K78 and S158 each act as charge relay system in the active site. S182 functions as the Acyl-ester intermediate in the catalytic mechanism.

Belongs to the amidase family. GatA subfamily. In terms of assembly, heterotrimer of A, B and C subunits.

The enzyme catalyses L-glutamyl-tRNA(Gln) + L-glutamine + ATP + H2O = L-glutaminyl-tRNA(Gln) + L-glutamate + ADP + phosphate + H(+). Its function is as follows. Allows the formation of correctly charged Gln-tRNA(Gln) through the transamidation of misacylated Glu-tRNA(Gln) in organisms which lack glutaminyl-tRNA synthetase. The reaction takes place in the presence of glutamine and ATP through an activated gamma-phospho-Glu-tRNA(Gln). The protein is Glutamyl-tRNA(Gln) amidotransferase subunit A of Caulobacter sp. (strain K31).